The primary structure comprises 337 residues: MAVKVAINGFGRIGRLAARAILSRPDSGLELVTINDLGSVEGNAFLFKRDSAHGTYPGTVTTEGNDMVIDGKKIVVTAERDPANLPHKKLGVDIVMECTGIFTNTEKASAHLTAGAKKVLISAPAKGDVDRTVVYGVNHKDLTADDKIVSNASCTTNCLAPVLHVLQQKIGIVRGLMTTVHSFTNDQRILDQIHSDLRRARTASASMIPTSTGAARAVALVIPELKGKLDGISIRVPTPDVSLVDFTFVPQRDTTAEEINSVLKAAADTGDMTGVLGYTDEPLVSRDFYSDPHSSTVDSRETAVLEGKLARVVAWYDNEWGFSNRMVDTAAQMAKTL.

NAD(+)-binding positions include Arg-12–Ile-13, Asp-36, Arg-80, and Ser-122. D-glyceraldehyde 3-phosphate is bound by residues Ser-153–Thr-155 and Thr-184. The active-site Nucleophile is the Cys-154. Residue Asn-185 coordinates NAD(+). Residues Arg-199, Thr-212 to Gly-213, and Arg-235 each bind D-glyceraldehyde 3-phosphate. NAD(+) is bound at residue Asn-318.

Belongs to the glyceraldehyde-3-phosphate dehydrogenase family. As to quaternary structure, homotetramer.

It is found in the cytoplasm. It carries out the reaction D-glyceraldehyde 3-phosphate + phosphate + NAD(+) = (2R)-3-phospho-glyceroyl phosphate + NADH + H(+). It functions in the pathway carbohydrate degradation; glycolysis; pyruvate from D-glyceraldehyde 3-phosphate: step 1/5. Catalyzes the oxidative phosphorylation of glyceraldehyde 3-phosphate (G3P) to 1,3-bisphosphoglycerate (BPG) using the cofactor NAD. The first reaction step involves the formation of a hemiacetal intermediate between G3P and a cysteine residue, and this hemiacetal intermediate is then oxidized to a thioester, with concomitant reduction of NAD to NADH. The reduced NADH is then exchanged with the second NAD, and the thioester is attacked by a nucleophilic inorganic phosphate to produce BPG. The polypeptide is Glyceraldehyde-3-phosphate dehydrogenase (gap) (Zymomonas mobilis subsp. mobilis (strain ATCC 31821 / ZM4 / CP4)).